The following is a 268-amino-acid chain: Tryptophan synthase alpha chain (268 aa).

Catalysis depends on proton acceptor residues Glu49 and Asp60.

Belongs to the TrpA family. In terms of assembly, tetramer of two alpha and two beta chains.

The enzyme catalyses (1S,2R)-1-C-(indol-3-yl)glycerol 3-phosphate + L-serine = D-glyceraldehyde 3-phosphate + L-tryptophan + H2O. It participates in amino-acid biosynthesis; L-tryptophan biosynthesis; L-tryptophan from chorismate: step 5/5. Functionally, the alpha subunit is responsible for the aldol cleavage of indoleglycerol phosphate to indole and glyceraldehyde 3-phosphate. The protein is Tryptophan synthase alpha chain of Serratia proteamaculans (strain 568).